The sequence spans 474 residues: Ribulose bisphosphate carboxylase large chain (474 aa).

Substrate contacts are provided by Asn122 and Thr172. The Proton acceptor role is filled by Lys174. Lys176 provides a ligand contact to substrate. Positions 200, 202, and 203 each coordinate Mg(2+). At Lys200 the chain carries N6-carboxylysine. Catalysis depends on His293, which acts as the Proton acceptor. 3 residues coordinate substrate: Arg294, His326, and Ser378.

Belongs to the RuBisCO large chain family. Type I subfamily. In terms of assembly, heterohexadecamer of 8 large chains and 8 small chains; disulfide-linked. The disulfide link is formed within the large subunit homodimers. Requires Mg(2+) as cofactor. The disulfide bond which can form in the large chain dimeric partners within the hexadecamer appears to be associated with oxidative stress and protein turnover.

Its subcellular location is the carboxysome. The enzyme catalyses 2 (2R)-3-phosphoglycerate + 2 H(+) = D-ribulose 1,5-bisphosphate + CO2 + H2O. It carries out the reaction D-ribulose 1,5-bisphosphate + O2 = 2-phosphoglycolate + (2R)-3-phosphoglycerate + 2 H(+). Its function is as follows. RuBisCO catalyzes two reactions: the carboxylation of D-ribulose 1,5-bisphosphate, the primary event in carbon dioxide fixation, as well as the oxidative fragmentation of the pentose substrate in the photorespiration process. Both reactions occur simultaneously and in competition at the same active site. The chain is Ribulose bisphosphate carboxylase large chain from Synechococcus sp. (strain JA-3-3Ab) (Cyanobacteria bacterium Yellowstone A-Prime).